Reading from the N-terminus, the 130-residue chain is Holo-[acyl-carrier-protein] synthase (130 aa).

Mg(2+)-binding residues include Asp-9 and Glu-58.

The protein belongs to the P-Pant transferase superfamily. AcpS family. It depends on Mg(2+) as a cofactor.

Its subcellular location is the cytoplasm. It catalyses the reaction apo-[ACP] + CoA = holo-[ACP] + adenosine 3',5'-bisphosphate + H(+). Functionally, transfers the 4'-phosphopantetheine moiety from coenzyme A to a Ser of acyl-carrier-protein. The sequence is that of Holo-[acyl-carrier-protein] synthase from Mycobacterium tuberculosis (strain CDC 1551 / Oshkosh).